Consider the following 788-residue polypeptide: Integrin beta-6 (788 aa).

An N-terminal signal peptide occupies residues 1–21 (MGIELLCLFFLFLGRNDHVQG). In terms of domain architecture, PSI spans 22–71 (GCALGGAETCEDCLLIGPQCAWCSQENFTYLSGVGERCDTPANLLAKGCQ). The Extracellular portion of the chain corresponds to 22-709 (GCALGGAETC…KDCPKPPNSP (688 aa)). Disulfide bonds link C23-C41, C31-C454, C34-C59, C44-C70, C197-C204, C252-C293, C394-C406, C426-C452, C456-C476, C467-C479, C481-C490, C492-C519, C502-C517, C511-C522, C524-C537, C539-C560, C544-C558, C552-C563, C565-C574, C576-C599, C583-C597, C591-C602, C604-C614, C617-C620, C624-C670, C630-C649, C633-C645, and C678-C702. N-linked (GlcNAc...) asparagine glycosylation is found at N48 and N97. The region spanning 131–371 (YPVDLYYLMD…QLIISAYEEL (241 aa)) is the VWFA domain. Residues D140, S142, and S144 each contribute to the Mg(2+) site. The Ca(2+) site is built by S144, D147, D148, and E179. Ca(2+)-binding residues include N235, D237, P239, and E240. E240 provides a ligand contact to Mg(2+). N-linked (GlcNAc...) asparagine glycosylation occurs at N260. 2 residues coordinate Ca(2+): D271 and K355. A glycan (N-linked (GlcNAc...) asparagine) is linked at N387. N418 carries N-linked (GlcNAc...) asparagine glycosylation. I-EGF domains are found at residues 456-491 (CQKE…PHCE), 492-538 (CGED…PYCQ), 539-575 (CDDF…EYCN), and 576-615 (CTTS…LTCE). 2 N-linked (GlcNAc...) asparagine glycosylation sites follow: N463 and N471. A helical membrane pass occupies residues 710 to 730 (MIMLGVSLAILLIGVVLLCIW). Residues 731 to 758 (KLLVSFHDRKEVAKFEAERSKAKWQTGT) form an interaction with HAX1 region. The Cytoplasmic portion of the chain corresponds to 731–788 (KLLVSFHDRKEVAKFEAERSKAKWQTGTNPLYRGSTSTFKNVTYKHREKQKVDLSMDG).

Belongs to the integrin beta chain family. As to quaternary structure, heterodimer of an alpha and a beta subunit. Interacts with FLNB. Interacts with HAX1. ITGAV:ITGB6 interacts with FBN1. ITGAV:ITGB6 interacts with TGFB1.

The protein localises to the cell membrane. The protein resides in the cell junction. Its subcellular location is the focal adhesion. In terms of biological role, integrin alpha-V:beta-6 (ITGAV:ITGB6) is a receptor for fibronectin and cytotactin. It recognizes the sequence R-G-D in its ligands. ITGAV:ITGB6 acts as a receptor for fibrillin-1 (FBN1) and mediates R-G-D-dependent cell adhesion to FBN1. Integrin alpha-V:beta-6 (ITGAV:ITGB6) mediates R-G-D-dependent release of transforming growth factor beta-1 (TGF-beta-1) from regulatory Latency-associated peptide (LAP), thereby playing a key role in TGF-beta-1 activation. The sequence is that of Integrin beta-6 (ITGB6) from Sus scrofa (Pig).